We begin with the raw amino-acid sequence, 179 residues long: Large ribosomal subunit protein uL5 (179 aa).

This sequence belongs to the universal ribosomal protein uL5 family. Part of the 50S ribosomal subunit; part of the 5S rRNA/L5/L18/L25 subcomplex. Contacts the 5S rRNA and the P site tRNA. Forms a bridge to the 30S subunit in the 70S ribosome.

Functionally, this is one of the proteins that bind and probably mediate the attachment of the 5S RNA into the large ribosomal subunit, where it forms part of the central protuberance. In the 70S ribosome it contacts protein S13 of the 30S subunit (bridge B1b), connecting the 2 subunits; this bridge is implicated in subunit movement. Contacts the P site tRNA; the 5S rRNA and some of its associated proteins might help stabilize positioning of ribosome-bound tRNAs. This is Large ribosomal subunit protein uL5 from Exiguobacterium sibiricum (strain DSM 17290 / CCUG 55495 / CIP 109462 / JCM 13490 / 255-15).